Consider the following 156-residue polypeptide: Cyanate hydratase (156 aa).

Catalysis depends on residues Arg-96, Glu-99, and Ser-122.

This sequence belongs to the cyanase family.

The enzyme catalyses cyanate + hydrogencarbonate + 3 H(+) = NH4(+) + 2 CO2. Functionally, catalyzes the reaction of cyanate with bicarbonate to produce ammonia and carbon dioxide. In Mycobacteroides abscessus (strain ATCC 19977 / DSM 44196 / CCUG 20993 / CIP 104536 / JCM 13569 / NCTC 13031 / TMC 1543 / L948) (Mycobacterium abscessus), this protein is Cyanate hydratase.